The following is a 77-amino-acid chain: Translation initiation factor IF-1, chloroplastic (77 aa).

Residues 1–71 (MKEQKWIHEG…TRGRIIYRLR (71 aa)) enclose the S1-like domain.

This sequence belongs to the IF-1 family. In terms of assembly, component of the 30S ribosomal translation pre-initiation complex which assembles on the 30S ribosome in the order IF-2 and IF-3, IF-1 and N-formylmethionyl-tRNA(fMet); mRNA recruitment can occur at any time during PIC assembly.

The protein resides in the plastid. It localises to the chloroplast. Functionally, one of the essential components for the initiation of protein synthesis. Stabilizes the binding of IF-2 and IF-3 on the 30S subunit to which N-formylmethionyl-tRNA(fMet) subsequently binds. Helps modulate mRNA selection, yielding the 30S pre-initiation complex (PIC). Upon addition of the 50S ribosomal subunit IF-1, IF-2 and IF-3 are released leaving the mature 70S translation initiation complex. This chain is Translation initiation factor IF-1, chloroplastic, found in Lactuca sativa (Garden lettuce).